The following is a 334-amino-acid chain: Malate dehydrogenase, cytoplasmic (334 aa).

Residue serine 2 is modified to N-acetylserine. NAD(+) contacts are provided by residues 11–17 and aspartate 42; that span reads GAAGQIA. The substrate site is built by arginine 92 and arginine 98. Asparagine 105 serves as a coordination point for NAD(+). Position 110 is an N6-succinyllysine (lysine 110). Glutamine 112 is an NAD(+) binding site. N6-acetyllysine is present on residues lysine 118 and lysine 121. 129–131 contacts NAD(+); it reads VGN. The substrate site is built by asparagine 131 and arginine 162. Histidine 187 serves as the catalytic Proton acceptor. An N6-succinyllysine modification is found at lysine 214. Serine 217 bears the Phosphoserine mark. Omega-N-methylarginine is present on arginine 230. The residue at position 241 (serine 241) is a Phosphoserine. Lysine 298 is modified (N6-acetyllysine; alternate). N6-succinyllysine; alternate is present on lysine 298. Serine 309 is subject to Phosphoserine. Lysine 318 carries the post-translational modification N6-succinyllysine. Serine 332 and serine 333 each carry phosphoserine.

Belongs to the LDH/MDH superfamily. MDH type 2 family. In terms of assembly, homodimer. ISGylated. In terms of processing, acetylation at Lys-118 dramatically enhances enzymatic activity and promotes adipogenic differentiation.

It is found in the cytoplasm. The protein localises to the cytosol. The catalysed reaction is (S)-malate + NAD(+) = oxaloacetate + NADH + H(+). It catalyses the reaction (2R)-2-hydroxy-3-(4-hydroxyphenyl)propanoate + NAD(+) = 3-(4-hydroxyphenyl)pyruvate + NADH + H(+). The enzyme catalyses (S)-2-hydroxyglutarate + NAD(+) = 2-oxoglutarate + NADH + H(+). Catalyzes the reduction of aromatic alpha-keto acids in the presence of NADH. Plays essential roles in the malate-aspartate shuttle and the tricarboxylic acid cycle, important in mitochondrial NADH supply for oxidative phosphorylation. Catalyzes the reduction of 2-oxoglutarate to 2-hydroxyglutarate, leading to elevated reactive oxygen species (ROS). In Rattus norvegicus (Rat), this protein is Malate dehydrogenase, cytoplasmic (Mdh1).